We begin with the raw amino-acid sequence, 503 residues long: MSNIYNIEILQIIDSVAREKGISKEILISTVEQAVQVAGRKKYGNEYNIKAQINRKTGEINLLRILKIVEDVEDYLTQISLEDALVKNPEAKIGDEIYEYLPPIDHARVSAQAAKQVITQRVIEAEREKQYHDFKDRKGDIINGIVKRIEYGDIIVDLSRAEAIIKKDQLIKGEHFKPNDRIKAYVQDVRQETKGPQIFLSRVDNQMLVKLFKLEVPEILEDIIQIKSVARDPGSKAKIAVFASDSSIDPVGSCVGIRGNRVKAVTNELNGEKIDIVLWSNDLAQFIVNSLIPLAPSEITKILIDEDSHKVEVVVSQEHQSIAIGRRGQNVRLASKLTGWNIDIMTEEQESKRRNEEFSTSTELFMEALDVEEVIGQLLSVTGFNSVEQIASSEISTLTRIEGFEEELAVEIKNRAIHYVDLKNEKIIKKLEELGVEQELIDILELPLELILKFAEYGIKTIEDLGEMSVNEFKNLAPNSNITDENIKLLIKTARHHGELKDS.

One can recognise an S1 motif domain in the interval 139 to 203; the sequence is GDIINGIVKR…KGPQIFLSRV (65 aa). Positions 308–378 constitute a KH domain; the sequence is SHKVEVVVSQ…LDVEEVIGQL (71 aa).

This sequence belongs to the NusA family. Monomer. Binds directly to the core enzyme of the DNA-dependent RNA polymerase and to nascent RNA.

The protein localises to the cytoplasm. Participates in both transcription termination and antitermination. This chain is Transcription termination/antitermination protein NusA, found in Rickettsia prowazekii (strain Madrid E).